The chain runs to 415 residues: Dynein assembly factor with WD repeat domains 1 (415 aa).

WD repeat units lie at residues Ala90–Thr129, Gly132–Arg174, Gly175–Thr214, Gly217–Thr256, Gly259–Thr298, Gly301–Lys340, Gly343–Lys384, and His386–Arg415.

The protein belongs to the WD repeat WDR69 family.

It localises to the cytoplasm. The protein resides in the cytoskeleton. Its subcellular location is the flagellum basal body. The protein localises to the flagellum axoneme. Required for axonemal dynein assembly and ciliary motility in ciliated organs, including Kupffer's vesicle, during embryogenesis. Facilitates the onset of robust cilia motility during development. The polypeptide is Dynein assembly factor with WD repeat domains 1 (daw1) (Xenopus laevis (African clawed frog)).